The chain runs to 704 residues: Elongation factor G (704 aa).

In terms of domain architecture, tr-type G spans 8 to 290 (ARYRNIGISA…AVIDYLPSPV (283 aa)). GTP is bound by residues 17-24 (AHIDAGKT), 88-92 (DTPGH), and 142-145 (NKMD). An N6-acetyllysine mark is found at Lys-504 and Lys-643.

Belongs to the TRAFAC class translation factor GTPase superfamily. Classic translation factor GTPase family. EF-G/EF-2 subfamily.

It is found in the cytoplasm. Functionally, catalyzes the GTP-dependent ribosomal translocation step during translation elongation. During this step, the ribosome changes from the pre-translocational (PRE) to the post-translocational (POST) state as the newly formed A-site-bound peptidyl-tRNA and P-site-bound deacylated tRNA move to the P and E sites, respectively. Catalyzes the coordinated movement of the two tRNA molecules, the mRNA and conformational changes in the ribosome. This is Elongation factor G from Shigella sonnei (strain Ss046).